Reading from the N-terminus, the 509-residue chain is MALSSALDSLWHQLDQLLSLINRNIITGIIVLPVLYVLLKVIYNLYLSPLAGYPGPKLWAVSRLPWNRANMKGRISWKIRELHDKYGPVVRIAPDELSYTTSGAWKKIYGQRNPEFVKALDGRGIAPASIGGQRSLMTEHQDKHLRLRRAIDPAFSQRALREQESYFQDHSDNLVQKLKQRCKDGPLDMTTWYNLVAFDIVSDLAFGEPSGCVNNPDQPWIQAILARAKAIVWFQLAVQYGFMGLLNWMTPKYVTESRKKHIAMTEAKLKARVEAKNPGKDFMSYILENDEKLNHLELVMLSSNFIVAGSGTSAGGMSGLTYLLLRNPDKLEKLKQEIRGLFKSRADMTLQAVTSCKYLRACLNEGMRLYPPTPGSLPRFVPGKGEMIEGKWVPGGYAVGVNQLAAGHSERNFKKAREFHPERWLDEPDSEFKDDDRSAVQPFSYGQRGCIGRSMAYAEMSLTMAKLVWYFDWELDEPDNDWWNQQGTYLVWEKLPLQVKLTPVSDVVE.

The helical transmembrane segment at 25–45 (IITGIIVLPVLYVLLKVIYNL) threads the bilayer. Cysteine 450 serves as a coordination point for heme.

Belongs to the cytochrome P450 family. It depends on heme as a cofactor.

It localises to the membrane. It participates in secondary metabolite biosynthesis. In terms of biological role, cytochrome P450 monooxygenase; part of the gene cluster that mediates the biosynthesis of alternapyrone derivatives. Alternapyrone is a decaketide with octa-methylation from methionine on every C2 unit except the third unit. All the domains in the polyketide synthase alt5 are apparently involved in alternapyrone synthesis, that is, the 8 CMeT, 7 KR, 7 DH, and 4 ER reactions in the 9 KS-mediated condensation steps required for alternapyrone synthesis. the alternapyrone produced by alt5 might be intensively modified by cytochrome P450 monooxygenases alt1, alt2 and alt3 and FAD-dependent oxidoreductase alt4 present in the alt gene cluster. In Alternaria solani, this protein is Cytochrome P450 monooxygenase alt3.